The following is a 325-amino-acid chain: Tyrosine phosphatase H2 (325 aa).

Residues 27–295 form the Tyrosine-protein phosphatase domain; the sequence is VTREHEKIMA…FFCYRVMERY (269 aa). The Phosphocysteine intermediate role is filled by Cys236.

This sequence belongs to the protein-tyrosine phosphatase family.

Its subcellular location is the host cytoplasm. It carries out the reaction O-phospho-L-tyrosyl-[protein] + H2O = L-tyrosyl-[protein] + phosphate. Functionally, suppresses host immune cell adhesion and phagocytosis. Triggers host mitochondrial membrane depolarization and caspase-dependent apoptosis. The polypeptide is Tyrosine phosphatase H2 (H2) (Microplitis demolitor bracovirus (isolate Webb) (MdBV)).